Reading from the N-terminus, the 340-residue chain is Myomesin-1 (340 aa).

A disordered region spans residues 177–212 (AEKARLKSRPSAPXTGQIIVTEEEPSEEAGTENXQR). Over residues 197-206 (TEEEPSEEAG) the composition is skewed to acidic residues.

Homodimer. Interacts with TTN/titin and PNKD. Seems to be expressed in all cardiac and skeletal fibers.

The protein localises to the cytoplasm. It localises to the myofibril. Its subcellular location is the sarcomere. It is found in the m line. Major component of the vertebrate myofibrillar M band. Binds myosin, titin, and light meromyosin. This binding is dose dependent. This is Myomesin-1 (MYOM1) from Bos taurus (Bovine).